A 396-amino-acid polypeptide reads, in one-letter code: Acetate kinase (396 aa).

Asn7 is a binding site for Mg(2+). Lys14 contacts ATP. Residue Arg86 coordinates substrate. The active-site Proton donor/acceptor is the Asp143. ATP contacts are provided by residues His203 to Gly207, Asp277 to Arg279, and Gly325 to His329. Residue Glu380 participates in Mg(2+) binding.

Belongs to the acetokinase family. As to quaternary structure, homodimer. Requires Mg(2+) as cofactor. It depends on Mn(2+) as a cofactor.

Its subcellular location is the cytoplasm. The catalysed reaction is acetate + ATP = acetyl phosphate + ADP. It participates in metabolic intermediate biosynthesis; acetyl-CoA biosynthesis; acetyl-CoA from acetate: step 1/2. Catalyzes the formation of acetyl phosphate from acetate and ATP. Can also catalyze the reverse reaction. In Sulfurovum sp. (strain NBC37-1), this protein is Acetate kinase.